The sequence spans 128 residues: 3-aminoacrylate deaminase RutC (128 aa).

Belongs to the RutC family. In terms of assembly, homotrimer.

It carries out the reaction (Z)-3-aminoacrylate + H2O + H(+) = 3-oxopropanoate + NH4(+). Its function is as follows. Involved in pyrimidine catabolism. Catalyzes the deamination of 3-aminoacrylate to malonic semialdehyde, a reaction that can also occur spontaneously. RutC may facilitate the reaction and modulate the metabolic fitness, rather than catalyzing essential functions. This Escherichia coli O157:H7 protein is 3-aminoacrylate deaminase RutC.